A 552-amino-acid chain; its full sequence is Alcohol dehydrogenase [acceptor] (552 aa).

Position 3-32 (3-32 (DYIIVGAGSAGCVLANRLSADPSKRVCLLE)) interacts with FAD. The active-site Proton acceptor is the H469.

Belongs to the GMC oxidoreductase family. The cofactor is FAD.

The protein resides in the cell inner membrane. The catalysed reaction is a primary alcohol + A = an aldehyde + AH2. Functionally, converts aliphatic medium-chain-length alcohols into aldehydes. May be linked to the electron transfer chain. The polypeptide is Alcohol dehydrogenase [acceptor] (alkJ) (Pseudomonas putida (Arthrobacter siderocapsulatus)).